The primary structure comprises 466 residues: Asparagine--tRNA ligase (466 aa).

This sequence belongs to the class-II aminoacyl-tRNA synthetase family. As to quaternary structure, homodimer.

The protein localises to the cytoplasm. It catalyses the reaction tRNA(Asn) + L-asparagine + ATP = L-asparaginyl-tRNA(Asn) + AMP + diphosphate + H(+). The sequence is that of Asparagine--tRNA ligase from Buchnera aphidicola subsp. Baizongia pistaciae (strain Bp).